The sequence spans 1622 residues: Transient receptor potential cation channel subfamily M member 1 (1622 aa).

5 disordered regions span residues 1 to 25, 64 to 95, 450 to 490, 618 to 641, and 822 to 856; these read MGSM…GSQK, PPLP…KHTQ, LAPP…EVEE, LGME…EEEI, and SKEN…HKKQ. At 1-875 the chain is on the cytoplasmic side; that stretch reads MGSMRKMSSS…CEFYNAPIVK (875 aa). Residues 8–25 show a composition bias toward low complexity; that stretch reads SSSFKRGSIKSSTSGSQK. Residues 70-95 are compositionally biased toward polar residues; it reads APSTTGEDTKQADTQSGKWSVSKHTQ. Positions 472–483 are enriched in basic residues; sequence GRGKGKGKKKGK. Composition is skewed to basic and acidic residues over residues 823–832 and 843–853; these read KENEDGKEKE and GSRKGDEENEH. A helical transmembrane segment spans residues 876–896; that stretch reads FWFYTISYLGYLLLFNYVILV. The Extracellular segment spans residues 897–942; sequence RMDGWPSPQEWIVISYIVSLALEKIREILMSEPGKLSQKIKVWLQE. Residues 943–963 form a helical membrane-spanning segment; it reads YWNITDLVAISMFMVGAILRL. Residues 964–973 lie on the Cytoplasmic side of the membrane; the sequence is QSQPYMGYGR. A helical transmembrane segment spans residues 974–994; it reads VIYCVDIILWYIRVLDIFGVN. The Extracellular portion of the chain corresponds to 995 to 1006; the sequence is KYLGPYVMMIGK. A helical membrane pass occupies residues 1007-1027; the sequence is MMIDMLYFVVIMLVVLMSFGV. Residues 1028–1099 lie on the Cytoplasmic side of the membrane; sequence ARQAILHPEE…CIPGAWLTPA (72 aa). The helical transmembrane segment at 1100–1120 threads the bilayer; that stretch reads LMACYLLVANILLVNLLIAVF. Asparagine 1121 is a glycosylation site (N-linked (GlcNAc...) asparagine). Residues 1121–1150 are Extracellular-facing; sequence NNTFFEVKSISNQVWKFQRYQLIMTFHDRP. The chain crosses the membrane as a helical span at residues 1151–1171; that stretch reads VLPPPMIILSHIYIIIMRLSG. Residues 1172-1622 are Cytoplasmic-facing; the sequence is RCRKKREGDQ…QEKRSAETEC (451 aa). The stretch at 1224-1252 forms a coiled coil; it reads DERIRVTSERVENMSMRLEEINERENFMK. Disordered stretches follow at residues 1354-1383, 1389-1408, and 1567-1622; these read EDAK…RSRL, LSTE…EFDP, and CLRS…ETEC. Residues 1613 to 1622 are compositionally biased toward basic and acidic residues; the sequence is QEKRSAETEC.

Belongs to the transient receptor (TC 1.A.4) family. LTrpC subfamily. TRPM1 sub-subfamily. As to quaternary structure, homodimer. Interacts with TRPM3; the interaction results in the formation of a heteromultimeric cation channel complex that are functionally different from the homomeric channels. Interacts with GPR179. Associates with both guanine nucleotide-binding proteins G(o) and beta-gamma G protein dimer; implicated in directly regulating TRPM1 channel open-state. In terms of tissue distribution, expressed in the retina where it localizes on dendritic tips of ON bipolar cells. Specifically, it is expressed in retinal bipolar cells (BPCs) of the ON subtype. Not detected in brain, lung, liver, heart, kidney, spleen or small intestine. Also expressed at high levels in poorly metastatic variants of B16 melanoma and at much reduced levels in highly metastatic variants of B16 melanoma.

The protein resides in the cell membrane. Its subcellular location is the endoplasmic reticulum membrane. It localises to the cell projection. It is found in the axon. The catalysed reaction is Ca(2+)(in) = Ca(2+)(out). It carries out the reaction Mg(2+)(in) = Mg(2+)(out). It catalyses the reaction Mn(2+)(in) = Mn(2+)(out). The enzyme catalyses Ni(2+)(in) = Ni(2+)(out). With respect to regulation, inhibited by extracellular zinc ions. Inhibited by intracellular Mg(2+). Activated by the neuroactive steroid pregnenolone sulfate. Negatively regulated by activation of GRM6 receptors in the ON-bipolar cells. Its function is as follows. Constitutively open nonselective divalent cation-conducting channels which mediate the influx of Ca(2+), Mg(2+), Mn(2+), Ba(2+), and Ni(2+) into the cytoplasm, leading to membrane depolarization. Impermeable to zinc ions. In addition, forms heteromultimeric ion channels with TRPM3 which are permeable for calcium and zinc ions. Plays an essential role for the depolarizing photoresponse of retinal ON bipolar cells. In the dark, tonic release of glutamate activates the G-protein coupled receptor for glutamate (GRM6), its activation induces the release of G(o) and the beta-gamma G protein dimer. Both subunits can interact and inactivate the TRPM1 channel. A light onset, induces decrease in glutamate release and deactivation of GRM6 leading to channel opening and membrane depolarization. May play a role in metastasis suppression. In Mus musculus (Mouse), this protein is Transient receptor potential cation channel subfamily M member 1.